Reading from the N-terminus, the 400-residue chain is Phosphoglycerate kinase (400 aa).

Residues 22–24, Arg37, 60–63, Arg119, and Arg159 contribute to the substrate site; these read DLN and HLGR. Residues Lys209, Gly297, Glu328, and 354–357 each bind ATP; that span reads GGDS.

The protein belongs to the phosphoglycerate kinase family. Monomer.

It is found in the cytoplasm. It carries out the reaction (2R)-3-phosphoglycerate + ATP = (2R)-3-phospho-glyceroyl phosphate + ADP. Its pathway is carbohydrate degradation; glycolysis; pyruvate from D-glyceraldehyde 3-phosphate: step 2/5. The polypeptide is Phosphoglycerate kinase (Saccharopolyspora erythraea (strain ATCC 11635 / DSM 40517 / JCM 4748 / NBRC 13426 / NCIMB 8594 / NRRL 2338)).